We begin with the raw amino-acid sequence, 460 residues long: uncharacterized protein (460 aa).

The tat-type signal signal peptide spans Met-1–Ala-33.

It belongs to the metallo-dependent hydrolases superfamily. Post-translationally, exported by the Tat system. The position of the signal peptide cleavage has not been experimentally proven. Can also be exported by the Sec system.

This is an uncharacterized protein from Escherichia coli (strain K12).